The primary structure comprises 108 residues: Transmembrane protein 141 (108 aa).

2 helical membrane passes run Met-32–Ile-52 and Tyr-58–Val-78.

It belongs to the TMEM141 family.

It is found in the membrane. This chain is Transmembrane protein 141 (TMEM141), found in Homo sapiens (Human).